The following is a 383-amino-acid chain: 8-amino-7-oxononanoate synthase (383 aa).

Residue Arg-23 participates in substrate binding. 110 to 111 (GF) is a binding site for pyridoxal 5'-phosphate. His-135 is a binding site for substrate. Pyridoxal 5'-phosphate-binding residues include Ser-181, His-209, and Thr-235. The residue at position 238 (Lys-238) is an N6-(pyridoxal phosphate)lysine. Thr-351 serves as a coordination point for substrate.

Belongs to the class-II pyridoxal-phosphate-dependent aminotransferase family. BioF subfamily. As to quaternary structure, homodimer. Pyridoxal 5'-phosphate serves as cofactor.

The catalysed reaction is 6-carboxyhexanoyl-[ACP] + L-alanine + H(+) = (8S)-8-amino-7-oxononanoate + holo-[ACP] + CO2. It functions in the pathway cofactor biosynthesis; biotin biosynthesis. Functionally, catalyzes the decarboxylative condensation of pimeloyl-[acyl-carrier protein] and L-alanine to produce 8-amino-7-oxononanoate (AON), [acyl-carrier protein], and carbon dioxide. This is 8-amino-7-oxononanoate synthase from Aliivibrio fischeri (strain ATCC 700601 / ES114) (Vibrio fischeri).